Consider the following 211-residue polypeptide: Porin MspA (211 aa).

Positions 1-27 (MKAISRVLIAMVAAIAALFTSTGTSHA) are cleaved as a signal peptide.

This sequence belongs to the mycobacterial porin (TC 1.B.24) family. In terms of assembly, forms very stable octamers. Isolated as a 100 kDa complex that can be reduced to monomers upon boiling in 80% dimethyl sulfoxide for 15 minutes. Structures show a goblet with the wide end on the exterior of the outer membrane and a central channel. It is not known if mixed oligomers of MspA with other Msp subunits form in vivo.

It is found in the cell outer membrane. The protein resides in the secreted. The protein localises to the cell wall. Its function is as follows. The major porin in this organism, forms a water-filled channel which favors the permeation of cations, amino acids, iron Fe(3+) and less efficiently phosphate. Does not transport Fe-ExoMS, the predominant siderophore. Plays a role in transport of beta-lactamase and hydrophilic fluoroquinolone antibiotics such as norfloxacin as well as chloramphenicol. There are about 2400 porins in wild-type, 800 in an mspA deletion and 150 in a double mspA-mspC deletion. Different conductance values with maxima at 2.3 and 4.6 nanosiemens might be caused by a simultaneous reconstitution of MspA channels into the membrane or by the existence of different MspA conformations. This is Porin MspA (mspA) from Mycolicibacterium smegmatis (strain ATCC 700084 / mc(2)155) (Mycobacterium smegmatis).